A 267-amino-acid chain; its full sequence is uncharacterized protein (267 aa).

The disordered stretch occupies residues 1-55 (MTEERKETFEEEINQSERIDADEEPLSRMSRKASRQSKQKQKQKQKPRQERGEST). The segment covering 9-24 (FEEEINQSERIDADEE) has biased composition (acidic residues). The segment covering 29-46 (MSRKASRQSKQKQKQKQK) has biased composition (basic residues). 5 consecutive transmembrane segments (helical) span residues 93–115 (YKYGLISMLIFSIIFSIGNWFQL), 135–157 (GFLVVLVYLLIFFAVMVFAIWAV), 173–195 (AVLGSLLVPVIAVSILWLIFAIV), 199–221 (MLTVLFTVLILFSIFFIIALYVQ), and 234–256 (YIYCVFAVVAIALLFTAVTWPFI).

The protein resides in the cell membrane. This is an uncharacterized protein from Bacillus subtilis (strain 168).